The chain runs to 269 residues: UPF0162 protein bbp_163 (269 aa).

It belongs to the UPF0162 family.

The sequence is that of UPF0162 protein bbp_163 from Buchnera aphidicola subsp. Baizongia pistaciae (strain Bp).